A 473-amino-acid chain; its full sequence is Lactate utilization protein B (473 aa).

4Fe-4S ferredoxin-type domains follow at residues 303-333 (GTAFQPVLQCIRCAACINVCPVYRHVGGHSY) and 352-381 (YDDYQELPFASSLCAACTDACPVKIPLHEL). Positions 312, 315, 318, 322, 365, 368, and 372 each coordinate [4Fe-4S] cluster.

The protein belongs to the LutB/YkgF family.

In terms of biological role, is involved in L-lactate degradation and allows cells to grow with lactate as the sole carbon source. Has probably a role as an electron transporter during oxidation of L-lactate. This is Lactate utilization protein B from Bacillus pumilus (strain SAFR-032).